The sequence spans 511 residues: Xylose import ATP-binding protein XylG (511 aa).

ABC transporter domains follow at residues 6-244 and 261-506; these read LEMR…VGRE and FEAR…IGKP.

The protein belongs to the ABC transporter superfamily. Xylose importer (TC 3.A.1.2.4) family. As to quaternary structure, the complex is composed of two ATP-binding proteins (XylG), two transmembrane proteins (XylH) and a solute-binding protein (XylF).

The protein resides in the cell inner membrane. It catalyses the reaction D-xylose(out) + ATP + H2O = D-xylose(in) + ADP + phosphate + H(+). Functionally, part of the ABC transporter complex XylFGH involved in xylose import. Responsible for energy coupling to the transport system. The chain is Xylose import ATP-binding protein XylG from Brucella melitensis biotype 1 (strain ATCC 23456 / CCUG 17765 / NCTC 10094 / 16M).